A 917-amino-acid polypeptide reads, in one-letter code: Spermatogenesis-associated protein 31D3 (917 aa).

Residues 29–49 (FICLSGLGLFILYLFYMVLTL) traverse the membrane as a helical segment. Disordered regions lie at residues 55–80 (EKNN…KDRK), 152–195 (SVSP…PPPL), and 773–797 (SQET…LRSN). A compositionally biased stretch (basic residues) spans 63 to 74 (HQGRARRKRKSV). Low complexity predominate over residues 152–163 (SVSPLASSASGA). Residues 164-177 (ESSFTLASTPSATT) show a composition bias toward polar residues. Basic and acidic residues predominate over residues 782–797 (LLHDPETSSEEDLRSN).

The protein belongs to the SPATA31 family.

It is found in the membrane. Functionally, may play a role in spermatogenesis. The sequence is that of Spermatogenesis-associated protein 31D3 (SPATA31D3) from Homo sapiens (Human).